An 805-amino-acid chain; its full sequence is Phenylalanine--tRNA ligase beta subunit (805 aa).

The tRNA-binding domain occupies 39–154; that stretch reads SEGLKKVVVG…DDATPGDPVF (116 aa). In terms of domain architecture, B5 spans 410–485; it reads VQPTTVTIDL…RLYGYDNLPA (76 aa). Mg(2+) contacts are provided by Asp463, Asp469, Glu472, and Glu473. Residues 712–805 form the FDX-ACB domain; that stretch reads SKFPSITRDV…LTDELGAEIR (94 aa).

Belongs to the phenylalanyl-tRNA synthetase beta subunit family. Type 1 subfamily. In terms of assembly, tetramer of two alpha and two beta subunits. It depends on Mg(2+) as a cofactor.

Its subcellular location is the cytoplasm. The catalysed reaction is tRNA(Phe) + L-phenylalanine + ATP = L-phenylalanyl-tRNA(Phe) + AMP + diphosphate + H(+). The protein is Phenylalanine--tRNA ligase beta subunit of Lactiplantibacillus plantarum (strain ATCC BAA-793 / NCIMB 8826 / WCFS1) (Lactobacillus plantarum).